A 116-amino-acid chain; its full sequence is Cation channel sperm-associated auxiliary subunit TMEM262 (116 aa).

The Cytoplasmic portion of the chain corresponds to 1–16 (MRWRDRIAVLCFPPGL). A helical transmembrane segment spans residues 17–38 (MLTVAALILFFIHMGVFASDVH). Residues 39 to 51 (NFCVIHNYDHMSF) are Extracellular-facing. Residues 52–72 (RYTVVLIFSQVISIGWAAMGS) traverse the membrane as a helical segment. Topologically, residues 73–84 (LYAEMTGDKFLR) are cytoplasmic. The helical transmembrane segment at 85 to 107 (CFALTILILNGAMFFNRLCLEFL) threads the bilayer. The Extracellular portion of the chain corresponds to 108–116 (AINYREERH).

In terms of assembly, component of the CatSper complex or CatSpermasome composed of the core pore-forming members CATSPER1, CATSPER2, CATSPER3 and CATSPER4 as well as auxiliary members CATSPERB, CATSPERG, CATSPERD, CATSPERE, CATSPERZ, C2CD6/CATSPERT, SLCO6C1, TMEM249, TMEM262 and EFCAB9. HSPA1 may be an additional auxiliary complex member. The core complex members CATSPER1, CATSPER2, CATSPER3 and CATSPER4 form a heterotetrameric channel. The auxiliary CATSPERB, CATSPERG2, CATSPERD and CATSPERE subunits form a pavilion-like structure over the pore which stabilizes the complex through interactions with CATSPER4, CATSPER3, CATSPER1 and CATSPER2 respectively. SLCO6C1 interacts with CATSPERE and TMEM262/CATSPERH interacts with CATSPERB, further stabilizing the complex. C2CD6/CATSPERT interacts at least with CATSPERD and is required for targeting the CatSper complex in the flagellar membrane.

The protein resides in the cell projection. It localises to the cilium. It is found in the flagellum membrane. Its function is as follows. Auxiliary component of the CatSper complex, a complex involved in sperm cell hyperactivation. This Mus musculus (Mouse) protein is Cation channel sperm-associated auxiliary subunit TMEM262.